A 135-amino-acid polypeptide reads, in one-letter code: Ribosome-binding factor A (135 aa).

Belongs to the RbfA family. Monomer. Binds 30S ribosomal subunits, but not 50S ribosomal subunits or 70S ribosomes.

It localises to the cytoplasm. Functionally, one of several proteins that assist in the late maturation steps of the functional core of the 30S ribosomal subunit. Associates with free 30S ribosomal subunits (but not with 30S subunits that are part of 70S ribosomes or polysomes). Required for efficient processing of 16S rRNA. May interact with the 5'-terminal helix region of 16S rRNA. The sequence is that of Ribosome-binding factor A from Sinorhizobium fredii (strain NBRC 101917 / NGR234).